Here is a 412-residue protein sequence, read N- to C-terminus: Autophagy-related protein 18 (412 aa).

WD repeat units follow at residues 100-139 (RFNK…NIMD), 142-183 (TNKL…SVST), and 186-226 (AHEG…RLFE). Residues 227-230 (FRRG) carry the L/FRRG motif motif. The WD 4 repeat unit spans residues 232–271 (TRCVNIYSLCFSSDSKYLTSSSNTETVHVFKLEKTEGVDN). The segment at 363 to 412 (HNIGPKSDTSRASPTSTGSGGAAKSAEASNQSVPNMDDPDDFPPMSHTSG) is disordered. A compositionally biased stretch (low complexity) spans 372–391 (SRASPTSTGSGGAAKSAEAS).

The protein belongs to the WD repeat PROPPIN family. Expressed in neurons and intestinal cells.

The protein resides in the cytoplasmic vesicle. It is found in the phagosome membrane. The protein localises to the cytoplasm. In terms of biological role, component of the autophagy machinery that is recruited to phosphatidylinositols on preautophagosomal structures, which are early autophagic structures, to promote autophagosome formation, and the subsequent degradation and clearance of engulfed apoptotic cells and P-granules in somatic cells. In particular, binds with high affinity to phosphatidylinositols including phosphatidylinositol 3-phosphate (PtdIns(3)P), phosphatidylinositol 4-phosphate (PtdIns(4)P), and phosphatidylinositol 5-phosphate (PtdIns(5)P), and more weakly to phosphatidylinositol 3,5-bisphosphate (PtdIns(3,5)P2). Plays a role in mitophagy, which is the autophagic consumption of mitochondria, in response to dietary restriction. Involved in xenophagy, the autophagy-mediated degradation of pathogens and pathogen products, such as toxins. Also plays a role in membrane-pore repair. In a daf-18/PTEN- and daf-16/FOXO-dependent manner, required for the proliferation of germ stem cell progenitors in the gonad during the late phases of larval development. By regulating the release of neurotransmitters and neuropeptides, involved in the control of lifespan in response to dietary restriction and daf-2 signaling. Probably through its involvement in autophagy, required for dauer formation. This Caenorhabditis elegans protein is Autophagy-related protein 18.